Reading from the N-terminus, the 199-residue chain is Recombination protein RecR (199 aa).

The C4-type zinc-finger motif lies at 56-71 (CATCGNVAQEELCNIC). The Toprim domain occupies 79-174 (SVICVVEEPK…KVTRLASGLP (96 aa)).

It belongs to the RecR family.

Its function is as follows. May play a role in DNA repair. It seems to be involved in an RecBC-independent recombinational process of DNA repair. It may act with RecF and RecO. This chain is Recombination protein RecR, found in Streptomyces avermitilis (strain ATCC 31267 / DSM 46492 / JCM 5070 / NBRC 14893 / NCIMB 12804 / NRRL 8165 / MA-4680).